The following is a 256-amino-acid chain: Probable tRNA(His) guanylyltransferase (256 aa).

Residues D29, G30, and D76 each contribute to the Mg(2+) site. GTP contacts are provided by residues 29-34 (DGRSFH) and 75-76 (SD).

The protein belongs to the tRNA(His) guanylyltransferase family. The cofactor is Mg(2+).

The protein resides in the cytoplasm. It catalyses the reaction a 5'-end ribonucleotide-tRNA(His) + GTP + ATP + H2O = a 5'-end phospho-guanosine-ribonucleotide-tRNA(His) + AMP + 2 diphosphate + H(+). Adds a GMP to the 5'-end of tRNA(His) after transcription and RNase P cleavage. The chain is Probable tRNA(His) guanylyltransferase (thg1) from Dictyostelium discoideum (Social amoeba).